An 86-amino-acid polypeptide reads, in one-letter code: Protein IDA-LIKE 1 (86 aa).

The first 27 residues, 1–27 (MNLSHKTMFMTLYIVFLLIFGSYNATA), serve as a signal peptide directing secretion.

As to expression, expressed in roots.

It localises to the secreted. The protein localises to the extracellular space. Involved in an ethylene-independent separation step of floral abscission. May act with RLK5 and HSL2 as ligand-receptor pairs. This is Protein IDA-LIKE 1 (IDL1) from Arabidopsis thaliana (Mouse-ear cress).